The following is a 39-amino-acid chain: Photosystem II reaction center protein L (39 aa).

Residues 18 to 38 form a helical membrane-spanning segment; it reads SLYLGLLLTFVMGILFSSYFF.

Belongs to the PsbL family. As to quaternary structure, PSII is composed of 1 copy each of membrane proteins PsbA, PsbB, PsbC, PsbD, PsbE, PsbF, PsbH, PsbI, PsbJ, PsbK, PsbL, PsbM, PsbT, PsbX, PsbY, Psb30/Ycf12, peripheral proteins PsbO, CyanoQ (PsbQ), PsbU, PsbV and a large number of cofactors. It forms dimeric complexes.

It localises to the cellular thylakoid membrane. Functionally, one of the components of the core complex of photosystem II (PSII). PSII is a light-driven water:plastoquinone oxidoreductase that uses light energy to abstract electrons from H(2)O, generating O(2) and a proton gradient subsequently used for ATP formation. It consists of a core antenna complex that captures photons, and an electron transfer chain that converts photonic excitation into a charge separation. This subunit is found at the monomer-monomer interface and is required for correct PSII assembly and/or dimerization. This is Photosystem II reaction center protein L from Prochlorococcus marinus (strain MIT 9211).